Reading from the N-terminus, the 340-residue chain is DNA-directed RNA polymerase subunit alpha (340 aa).

An alpha N-terminal domain (alpha-NTD) region spans residues 1-233; the sequence is MYRNWRDLIS…EQLSIFINFD (233 aa). Residues 251-340 are alpha C-terminal domain (alpha-CTD); that stretch reads VNENLYRSVD…RIRGERKDEE (90 aa).

Belongs to the RNA polymerase alpha chain family. In terms of assembly, homodimer. The RNAP catalytic core consists of 2 alpha, 1 beta, 1 beta' and 1 omega subunit. When a sigma factor is associated with the core the holoenzyme is formed, which can initiate transcription.

The enzyme catalyses RNA(n) + a ribonucleoside 5'-triphosphate = RNA(n+1) + diphosphate. Functionally, DNA-dependent RNA polymerase catalyzes the transcription of DNA into RNA using the four ribonucleoside triphosphates as substrates. This chain is DNA-directed RNA polymerase subunit alpha, found in Geobacter metallireducens (strain ATCC 53774 / DSM 7210 / GS-15).